The chain runs to 1942 residues: Myosin-2 (1942 aa).

Positions 33 to 82 (DAKTSVFVAEPKESFVKGTIQSKDAGKVTVKTEAGATLTVKEDQIFPMNP) constitute a Myosin N-terminal SH3-like domain. A phosphothreonine mark is found at T64 and T69. The region spanning 86 to 785 (DKIEDMAMMT…LLGLLEEMRD (700 aa)) is the Myosin motor domain. An ATP-binding site is contributed by 179-186 (GESGAGKT). At Y389 the chain carries Phosphotyrosine. Position 419 is a phosphothreonine (T419). Residue S625 is modified to Phosphoserine. The segment at 662 to 684 (LNKLMTNLRSTHPHFVRCIIPNE) is actin-binding. Residue H760 is modified to Pros-methylhistidine. One can recognise an IQ domain in the interval 788-817 (LAQLITRTQAMCRGFLARVEYQKMVERRES). Residues 849 to 1930 (SAETEKEMAT…ESQVNKLRVK (1082 aa)) adopt a coiled-coil conformation. Phosphoserine is present on residues S1095 and S1099. The interval 1130-1175 (EAERASRAKAEKQRSDLSRELEEISERLEEAGGATSAQIEMNKKRE) is disordered. Over residues 1131–1159 (AERASRAKAEKQRSDLSRELEEISERLEE) the composition is skewed to basic and acidic residues. Phosphoserine is present on residues S1165 and S1240. T1244 is subject to Phosphothreonine. The residue at position 1246 (S1246) is a Phosphoserine. Phosphothreonine is present on T1258. Residue S1264 is modified to Phosphoserine. T1289 carries the post-translational modification Phosphothreonine. 4 positions are modified to phosphoserine: S1291, S1295, S1306, and S1309. Y1467 bears the Phosphotyrosine mark. T1470 is modified (phosphothreonine). S1477 bears the Phosphoserine mark. Phosphotyrosine is present on Y1495. S1498 is subject to Phosphoserine. T1504 is subject to Phosphothreonine. S1517 carries the phosphoserine modification. Residue T1520 is modified to Phosphothreonine. Phosphoserine occurs at positions 1557, 1577, 1603, 1606, 1717, and 1729. 2 positions are modified to phosphothreonine: T1733 and T1739. S1742 bears the Phosphoserine mark.

The protein belongs to the TRAFAC class myosin-kinesin ATPase superfamily. Myosin family. In terms of assembly, muscle myosin is a hexameric protein that consists of 2 heavy chain subunits (MHC), 2 alkali light chain subunits (MLC) and 2 regulatory light chain subunits (MLC-2). Interacts with GCSAM. Expressed in type 2a myofibers in the tibialis anterior and soleus muscles (at protein level).

The protein localises to the cytoplasm. Its subcellular location is the myofibril. Myosins are actin-based motor molecules with ATPase activity essential for muscle contraction. The sequence is that of Myosin-2 from Mus musculus (Mouse).